The sequence spans 524 residues: Excitatory amino acid transporter 3 (524 aa).

Residues 1-18 (MGKPARKGCDSKRFLKNN) lie on the Cytoplasmic side of the membrane. Residues 19–38 (WLLLSTVVAVVLGIVIGVLV) traverse the membrane as a helical segment. At 39 to 61 (REYSNLSTLDKFYFAFPGEILMR) the chain is on the extracellular side. N43 is a glycosylation site (N-linked (GlcNAc...) asparagine). A helical transmembrane segment spans residues 62–82 (MLKLVILPLIVSSMITGVAAL). Topologically, residues 83–93 (DSNVSGKIGLR) are cytoplasmic. A helical transmembrane segment spans residues 94-114 (AVLYYFCTTIIAVILGIVLVV). Na(+) is bound by residues Y98, T101, and T102. The Extracellular segment spans residues 115 to 205 (SIKPGVTQKV…RTKEYRVVGL (91 aa)). N178 and N195 each carry an N-linked (GlcNAc...) asparagine glycan. A helical transmembrane segment spans residues 206 to 229 (YSDGINVLGLIVFCLVFGLVIGKM). Over 230-238 (GEKGQILVD) the chain is Cytoplasmic. Residues 239–266 (FFNALSDATMKIVQIIMCYMPLGILFLI) form a helical membrane-spanning segment. Residues 267–286 (AGKIIEVEDWEIFRKLGLYM) are Extracellular-facing. The chain crosses the membrane as a helical span at residues 287 to 308 (VTVLSGLAIHSIVILPLIYFIV). The Cytoplasmic segment spans residues 309-313 (VRKNP). The discontinuously helical intramembrane region spans 314-344 (FRFAMGMTQALLTALMISSSSATLPVTFRCA). Residues S331 and S333 each coordinate L-aspartate. Over 345–353 (EEKNRVDKR) the chain is Cytoplasmic. Residues 354 to 380 (ITRFVLPVGATINMDGTALYEAVAAVF) form a helical membrane-spanning segment. Na(+) is bound by residues G362, T364, N366, and D368. T370 is a binding site for L-aspartate. The Extracellular portion of the chain corresponds to 381 to 393 (IAQLNDMDLSIGQ). The segment at residues 394 to 427 (IITISVTATAASIGAAGVPQAGLVTMVIVLSAVG) is an intramembrane region (discontinuously helical). S405, I406, and A408 together coordinate Na(+). Residue V411 coordinates L-aspartate. At 428 to 440 (LPAEDVTLIIAVD) the chain is on the extracellular side. The helical transmembrane segment at 441 to 462 (WLLDRFRTVVNVLGDAFGTGIV) threads the bilayer. The L-aspartate site is built by R447, T448, and N451. Na(+) is bound by residues N451 and D455. Topologically, residues 463–524 (EKLSKKELEQ…TISFTQTSQF (62 aa)) are cytoplasmic. 2 positions are modified to phosphoserine: S517 and S522.

It belongs to the dicarboxylate/amino acid:cation symporter (DAACS) (TC 2.A.23) family. SLC1A1 subfamily. As to quaternary structure, homotrimer. Interacts with ARL6IP5. Interacts with RTN2 (via N-terminus); the interaction promotes cell surface expression of SLC1A1. Interacts with SORCS2; this interaction is important for normal expression at the cell membrane. In terms of tissue distribution, brain, but also small intestine, kidney, liver and heart.

The protein resides in the cell membrane. Its subcellular location is the apical cell membrane. It localises to the synapse. The protein localises to the synaptosome. It is found in the early endosome membrane. The protein resides in the late endosome membrane. Its subcellular location is the recycling endosome membrane. It carries out the reaction K(+)(in) + L-glutamate(out) + 3 Na(+)(out) + H(+)(out) = K(+)(out) + L-glutamate(in) + 3 Na(+)(in) + H(+)(in). The catalysed reaction is K(+)(in) + L-aspartate(out) + 3 Na(+)(out) + H(+)(out) = K(+)(out) + L-aspartate(in) + 3 Na(+)(in) + H(+)(in). The enzyme catalyses D-aspartate(out) + K(+)(in) + 3 Na(+)(out) + H(+)(out) = D-aspartate(in) + K(+)(out) + 3 Na(+)(in) + H(+)(in). It catalyses the reaction K(+)(in) + L-cysteine(out) + 3 Na(+)(out) + H(+)(out) = K(+)(out) + L-cysteine(in) + 3 Na(+)(in) + H(+)(in). Sodium-dependent, high-affinity amino acid transporter that mediates the uptake of L-glutamate and also L-aspartate and D-aspartate. Can also transport L-cysteine. Functions as a symporter that transports one amino acid molecule together with two or three Na(+) ions and one proton, in parallel with the counter-transport of one K(+) ion. Mediates Cl(-) flux that is not coupled to amino acid transport; this avoids the accumulation of negative charges due to aspartate and Na(+) symport. Plays an important role in L-glutamate and L-aspartate reabsorption in renal tubuli. Plays a redundant role in the rapid removal of released glutamate from the synaptic cleft, which is essential for terminating the postsynaptic action of glutamate. Contributes to glutathione biosynthesis and protection against oxidative stress via its role in L-glutamate and L-cysteine transport. Negatively regulated by ARL6IP5. The polypeptide is Excitatory amino acid transporter 3 (SLC1A1) (Oryctolagus cuniculus (Rabbit)).